Consider the following 181-residue polypeptide: Adenine phosphoribosyltransferase (181 aa).

The protein belongs to the purine/pyrimidine phosphoribosyltransferase family. In terms of assembly, homodimer.

Its subcellular location is the cytoplasm. It carries out the reaction AMP + diphosphate = 5-phospho-alpha-D-ribose 1-diphosphate + adenine. It functions in the pathway purine metabolism; AMP biosynthesis via salvage pathway; AMP from adenine: step 1/1. In terms of biological role, catalyzes a salvage reaction resulting in the formation of AMP, that is energically less costly than de novo synthesis. This chain is Adenine phosphoribosyltransferase, found in Shewanella loihica (strain ATCC BAA-1088 / PV-4).